Reading from the N-terminus, the 78-residue chain is DNA-directed RNA polymerase subunit omega (78 aa).

The protein belongs to the RNA polymerase subunit omega family. In cyanobacteria the RNAP catalytic core is composed of 2 alpha, 1 beta, 1 beta', 1 gamma and 1 omega subunit. When a sigma factor is associated with the core the holoenzyme is formed, which can initiate transcription.

It carries out the reaction RNA(n) + a ribonucleoside 5'-triphosphate = RNA(n+1) + diphosphate. Promotes RNA polymerase assembly. Latches the N- and C-terminal regions of the beta' subunit thereby facilitating its interaction with the beta and alpha subunits. The polypeptide is DNA-directed RNA polymerase subunit omega (Prochlorococcus marinus subsp. pastoris (strain CCMP1986 / NIES-2087 / MED4)).